The primary structure comprises 136 residues: Protein PsiE (136 aa).

4 consecutive transmembrane segments (helical) span residues 15–35 (ILQT…VVFL), 55–75 (YELV…ALIV), 82–102 (FHFP…RLII), and 108–128 (PLDV…LWLC).

Belongs to the PsiE family.

The protein localises to the cell inner membrane. The sequence is that of Protein PsiE from Escherichia coli O17:K52:H18 (strain UMN026 / ExPEC).